A 294-amino-acid chain; its full sequence is Proteasome subunit beta 1 (294 aa).

A propeptide spans 1–65 (MTADRPALRT…MESGDLAPHG (65 aa)) (removed in mature form; by autocatalysis). The active-site Nucleophile is the Thr-66.

The protein belongs to the peptidase T1B family. The 20S proteasome core is composed of 14 alpha and 14 beta subunits that assemble into four stacked heptameric rings, resulting in a barrel-shaped structure. The two inner rings, each composed of seven catalytic beta subunits, are sandwiched by two outer rings, each composed of seven alpha subunits. All four combinations of alpha- and beta-subunits (beta2-alpha1, beta2-alpha2, beta1-alpha2 and beta1-alpha1) yield fully assembled and proteolytically active proteasomes. The catalytic chamber with the active sites is on the inside of the barrel. Has probably a gated structure, the ends of the cylinder being occluded by the N-termini of the alpha-subunits. Is likely capped by the proteasome-associated ATPase, ARC.

The protein resides in the cytoplasm. The enzyme catalyses Cleavage of peptide bonds with very broad specificity.. It functions in the pathway protein degradation; proteasomal Pup-dependent pathway. The formation of the proteasomal ATPase ARC-20S proteasome complex, likely via the docking of the C-termini of ARC into the intersubunit pockets in the alpha-rings, may trigger opening of the gate for substrate entry. Interconversion between the open-gate and close-gate conformations leads to a dynamic regulation of the 20S proteasome proteolysis activity. Component of the proteasome core, a large protease complex with broad specificity involved in protein degradation. The R.erythropolis proteasomes are able to cleave oligopeptides after Tyr, Phe and Leu, very poorly after Arg but not after Glu. Thus, displays chymotrypsin-like activity, low trypsin-like activity but no caspase-like activity. The sequence is that of Proteasome subunit beta 1 from Rhodococcus erythropolis (Arthrobacter picolinophilus).